The following is a 212-amino-acid chain: Imidazole glycerol phosphate synthase subunit HisH (212 aa).

The Glutamine amidotransferase type-1 domain occupies 2 to 212 (KVAVIDYGMG…KNFLAWDGNV (211 aa)). The Nucleophile role is filled by Cys82. Catalysis depends on residues His190 and Glu192.

As to quaternary structure, heterodimer of HisH and HisF.

Its subcellular location is the cytoplasm. The catalysed reaction is 5-[(5-phospho-1-deoxy-D-ribulos-1-ylimino)methylamino]-1-(5-phospho-beta-D-ribosyl)imidazole-4-carboxamide + L-glutamine = D-erythro-1-(imidazol-4-yl)glycerol 3-phosphate + 5-amino-1-(5-phospho-beta-D-ribosyl)imidazole-4-carboxamide + L-glutamate + H(+). The enzyme catalyses L-glutamine + H2O = L-glutamate + NH4(+). The protein operates within amino-acid biosynthesis; L-histidine biosynthesis; L-histidine from 5-phospho-alpha-D-ribose 1-diphosphate: step 5/9. Functionally, IGPS catalyzes the conversion of PRFAR and glutamine to IGP, AICAR and glutamate. The HisH subunit catalyzes the hydrolysis of glutamine to glutamate and ammonia as part of the synthesis of IGP and AICAR. The resulting ammonia molecule is channeled to the active site of HisF. This chain is Imidazole glycerol phosphate synthase subunit HisH, found in Chromobacterium violaceum (strain ATCC 12472 / DSM 30191 / JCM 1249 / CCUG 213 / NBRC 12614 / NCIMB 9131 / NCTC 9757 / MK).